We begin with the raw amino-acid sequence, 175 residues long: MLPAYLSNPFAAVFGGGKPIDGGRTYKDGRRILGDGKTYRGLFSGIFCGFIAGCIEIWLSSRGFEIMGINMPVFGPDYKSALIVVLALASGALFGDMFKSFFKRRMGLKRGASLPLVDQLDFVVGAWVFTYLVAPEWFVSNFTHGIMLTVIIITPLLHLTTNIIGYLIGVKKEPW.

Transmembrane regions (helical) follow at residues 41 to 61, 82 to 102, 122 to 142, and 150 to 170; these read GLFSGIFCGFIAGCIEIWLSS, LIVVLALASGALFGDMFKSFF, FVVGAWVFTYLVAPEWFVSNF, and VIIITPLLHLTTNIIGYLIGV.

It belongs to the CDP-archaeol synthase family. Requires Mg(2+) as cofactor.

It localises to the cell membrane. It carries out the reaction 2,3-bis-O-(geranylgeranyl)-sn-glycerol 1-phosphate + CTP + H(+) = CDP-2,3-bis-O-(geranylgeranyl)-sn-glycerol + diphosphate. It functions in the pathway membrane lipid metabolism; glycerophospholipid metabolism. In terms of biological role, catalyzes the formation of CDP-2,3-bis-(O-geranylgeranyl)-sn-glycerol (CDP-archaeol) from 2,3-bis-(O-geranylgeranyl)-sn-glycerol 1-phosphate (DGGGP) and CTP. This reaction is the third ether-bond-formation step in the biosynthesis of archaeal membrane lipids. In Methanosarcina barkeri (strain Fusaro / DSM 804), this protein is CDP-archaeol synthase.